The chain runs to 611 residues: Chaperone protein DnaK (611 aa).

A Phosphothreonine; by autocatalysis modification is found at Thr-173. Residues 579–592 (AAGQAEGAQGAQDA) show a composition bias toward low complexity. Residues 579–611 (AAGQAEGAQGAQDAGAKKDNVVDAEFEEVKEDK) are disordered. The segment covering 600–611 (VDAEFEEVKEDK) has biased composition (acidic residues).

The protein belongs to the heat shock protein 70 family.

Acts as a chaperone. This Bacillus mycoides (strain KBAB4) (Bacillus weihenstephanensis) protein is Chaperone protein DnaK.